Consider the following 1969-residue polypeptide: Cytadherence high molecular weight protein 1 (1969 aa).

An HAT 1 repeat occupies 148 to 166 (YYDENEEWVWTGYFDEDNK). A disordered region spans residues 174–244 (KPAEVEALEE…QPESEQEGSG (71 aa)). Composition is skewed to acidic residues over residues 179–207 (EALE…EVVE) and 214–242 (QPEE…EQEG). 3 HAT repeats span residues 258 to 278 (YYDE…NNFV), 300 to 331 (AQQE…VEGY), and 333 to 353 (YYDE…NNFV). The segment at 294-319 (QVEEYSAQQEQVQEEYEQQPEQEGSG) is disordered. The interval 365–393 (VSEEQYSESVSEEQEPASEEQVAEEPAQV) is disordered. Over residues 374-387 (VSEEQEPASEEQVA) the composition is skewed to acidic residues. 2 HAT repeats span residues 477 to 497 (YYDE…GMFI) and 959 to 997 (LTLV…DQNN). Residues 1000 to 1027 (SDKDSKTQKVDQLIEEFNKQEAIKKTEE) adopt a coiled-coil conformation. An HAT 7 repeat occupies 1029–1067 (EAKKASEPFYNKYIGNKQFGYYNDKNVWIWNGYFDENDQ). Coiled-coil stretches lie at residues 1082-1190 (IEDE…FDNF), 1547-1621 (SVNQ…LALT), and 1758-1790 (NRGD…NKKV).

The protein localises to the cell projection. It is found in the attachment organelle membrane. Its function is as follows. Component of the cytoskeleton-like structure which stabilizes the shape of the wall-less Mycoplasma. This cytoskeleton-like network of accessory proteins containing HMW proteins 1 to 5 allows the proper anchoring of cytadhesin proteins in the mycoplasmal membrane at the attachment organelle. In Mycoplasmoides gallisepticum (strain R(low / passage 15 / clone 2)) (Mycoplasma gallisepticum), this protein is Cytadherence high molecular weight protein 1 (hlp1).